The following is a 194-amino-acid chain: HTH-type transcriptional regulator BetI (194 aa).

The 61-residue stretch at 8–68 (EIRRAQLIDA…ATMRHVLRDL (61 aa)) folds into the HTH tetR-type domain. Positions 31 to 50 (TLASVAQRANISTGIVSHYF) form a DNA-binding region, H-T-H motif.

It functions in the pathway amine and polyamine biosynthesis; betaine biosynthesis via choline pathway [regulation]. In terms of biological role, repressor involved in the biosynthesis of the osmoprotectant glycine betaine. It represses transcription of the choline transporter BetT and the genes of BetAB involved in the synthesis of glycine betaine. The sequence is that of HTH-type transcriptional regulator BetI from Burkholderia ambifaria (strain MC40-6).